We begin with the raw amino-acid sequence, 414 residues long: WW domain-containing oxidoreductase (414 aa).

A disordered region spans residues 1-23 (MAALRYAGLDDTDSEDELPPGWE). Residue Thr-12 is modified to Phosphothreonine. Ser-14 bears the Phosphoserine mark. The WW 1 domain maps to 16 to 49 (DELPPGWEERTTKDGWVYYANHTEEKTQWEHPKT). Tyr-33 bears the Phosphotyrosine mark. Positions 50–55 (GKRKRV) match the Nuclear localization signal motif. Residues 57-90 (GDLPYGWEQETDENGQVFFVDHINKRTTYLDPRL) form the WW 2 domain. The segment at 125-414 (KVVVVTGANS…IQERLGSQSG (290 aa)) is interaction with MAPT. 131–137 (GANSGIG) is an NADP(+) binding site. Positions 209 to 273 (CNAATFALPW…RFTDINDSLG (65 aa)) are mediates targeting to the mitochondria. Substrate is bound at residue Ser-260. A Phosphotyrosine; by TNK2 modification is found at Tyr-287. Tyr-293 functions as the Proton acceptor in the catalytic mechanism.

It belongs to the short-chain dehydrogenases/reductases (SDR) family. Interacts with TP53, p73/TP73 and MAPK8. Interacts with MAPT/TAU, RUNX2 and HYAL2. Forms a ternary complex with TP53 and MDM2. Interacts with ERBB4, LITAF and WBP1. Interacts with DVL1, DVL2 and DVL3. May interact with FAM189B and SCOTIN. Interacts with TNK2. Interacts with TMEM207. Interacts (via WW domain) with VOPP1. Post-translationally, phosphorylated upon genotoxic stress. Phosphorylation of Tyr-33 regulates interaction with TP53, TP73 and MAPK8. May also regulate proapoptotic activity. Phosphorylation by TNK2 is associated with polyubiquitination and degradation. In terms of processing, ubiquitinated when phosphorylated by TNK2, leading to its degradation. As to expression, widely expressed. Strongly expressed in testis, prostate, and ovary. Overexpressed in cancer cell lines. Isoform 5 and isoform 6 may only be expressed in tumor cell lines.

The protein localises to the cytoplasm. It localises to the nucleus. It is found in the mitochondrion. The protein resides in the golgi apparatus. Its subcellular location is the lysosome. Putative oxidoreductase. Acts as a tumor suppressor and plays a role in apoptosis. Required for normal bone development. May function synergistically with p53/TP53 to control genotoxic stress-induced cell death. Plays a role in TGFB1 signaling and TGFB1-mediated cell death. May also play a role in tumor necrosis factor (TNF)-mediated cell death. Inhibits Wnt signaling, probably by sequestering DVL2 in the cytoplasm. The protein is WW domain-containing oxidoreductase (WWOX) of Homo sapiens (Human).